The following is a 250-amino-acid chain: Pyridoxine 5'-phosphate synthase (250 aa).

The 3-amino-2-oxopropyl phosphate site is built by asparagine 8 and arginine 19. Histidine 44 functions as the Proton acceptor in the catalytic mechanism. Residues arginine 46 and histidine 51 each coordinate 1-deoxy-D-xylulose 5-phosphate. Residue glutamate 76 is the Proton acceptor of the active site. Threonine 106 contributes to the 1-deoxy-D-xylulose 5-phosphate binding site. The Proton donor role is filled by histidine 200. Residues aspartate 201 and 223 to 224 (GH) contribute to the 3-amino-2-oxopropyl phosphate site.

Belongs to the PNP synthase family. As to quaternary structure, homooctamer; tetramer of dimers.

It is found in the cytoplasm. It carries out the reaction 3-amino-2-oxopropyl phosphate + 1-deoxy-D-xylulose 5-phosphate = pyridoxine 5'-phosphate + phosphate + 2 H2O + H(+). Its pathway is cofactor biosynthesis; pyridoxine 5'-phosphate biosynthesis; pyridoxine 5'-phosphate from D-erythrose 4-phosphate: step 5/5. In terms of biological role, catalyzes the complicated ring closure reaction between the two acyclic compounds 1-deoxy-D-xylulose-5-phosphate (DXP) and 3-amino-2-oxopropyl phosphate (1-amino-acetone-3-phosphate or AAP) to form pyridoxine 5'-phosphate (PNP) and inorganic phosphate. This Rhizobium meliloti (strain 1021) (Ensifer meliloti) protein is Pyridoxine 5'-phosphate synthase.